Consider the following 205-residue polypeptide: High frequency lysogenization protein HflD homolog (205 aa).

Belongs to the HflD family.

Its subcellular location is the cytoplasm. It localises to the cell inner membrane. This is High frequency lysogenization protein HflD homolog from Shewanella sp. (strain MR-7).